We begin with the raw amino-acid sequence, 150 residues long: Avidin-related protein 7 (150 aa).

An N-terminal signal peptide occupies residues 1–24 (MVHATSPLLLLLLLSLALVAPGLS). Residues 26–147 (RKCSLTGEWD…GYNNFTRQRT (122 aa)) enclose the Avidin-like domain. Cysteines 28 and 105 form a disulfide. Residues Asn36 and Ser40 each contribute to the biotin site. 2 N-linked (GlcNAc...) asparagine glycosylation sites follow: Asn41 and Asn54. 3 residues coordinate biotin: Tyr57, Thr59, and Asp63. Asn93 carries an N-linked (GlcNAc...) asparagine glycan. Residues Ser95, Ser99, and Asn140 each coordinate biotin. Asn141 carries an N-linked (GlcNAc...) asparagine glycan.

It belongs to the avidin/streptavidin family. In terms of assembly, homotetramer. Glycosylated.

The protein resides in the secreted. In terms of biological role, forms a strong non-covalent specific complex with biotin. The polypeptide is Avidin-related protein 7 (AVR7) (Gallus gallus (Chicken)).